The chain runs to 585 residues: Proline-rich protein 14 (585 aa).

M1 bears the N-acetylmethionine mark. The segment at 1 to 135 is sufficient for heterochromatin association in interphase and chromatin association in anaphase; sequence MDLPGDSSPP…TLRRRSRTTP (135 aa). Disordered stretches follow at residues 23–46, 73–150, and 189–241; these read ALWG…PLEK, TSIP…RAPQ, and IVRQ…RPRL. Residues 85–378 form a required for the interaction with GRB2 and sufficient to promote the phosphorylation of AKT and cell proliferation region; it reads PVHRQPPASP…MARAPPPPRP (294 aa). Residues 119 to 132 show a composition bias toward basic residues; it reads RIHRTSSTLRRRSR. Residues 136-365 form a required for nuclear lamina association region; sequence GPEEGPSQKV…RPRPRRHTVG (230 aa). A compositionally biased stretch (pro residues) spans 193–205; that stretch reads PTPPPGDLEPPFQ. S277 bears the Phosphoserine mark. 2 disordered regions span residues 290–445 and 525–557; these read EAEQ…KVSR and DSSL…PDVG. The span at 337 to 356 shows a compositional bias: pro residues; it reads LGPPGPGTCTWPPAPPQPSR. Positions 393–409 are enriched in low complexity; sequence SPSLTTSCSSTASTSFS. The segment at 518–535 is required for nuclear localization; the sequence is RRAVEFRDSSLPRSRRPS.

In terms of assembly, interacts (via proline-rich region) with GRB2 (via SH3 domain 2). Interacts (via N-terminus) with CBX5.

It is found in the chromosome. The protein localises to the nucleus. The protein resides in the nucleus lamina. It localises to the nucleoplasm. In terms of biological role, functions in tethering peripheral heterochromatin to the nuclear lamina during interphase, possibly through the interaction with heterochromatin protein CBX5/HP1 alpha. Might play a role in reattaching heterochromatin to the nuclear lamina at mitotic exit. Promotes myoblast differentiation during skeletal myogenesis, possibly by stimulating transcription factor MyoD activity via binding to CBX5/HP1 alpha. Involved in the positive regulation of the PI3K-Akt-mTOR signaling pathway and in promoting cell proliferation, possibly via binding to GRB2. The polypeptide is Proline-rich protein 14 (PRR14) (Homo sapiens (Human)).